The sequence spans 356 residues: Holliday junction branch migration complex subunit RuvB (356 aa).

The segment at 4 to 192 (DDTTDATADE…FGFTAHMEFY (189 aa)) is large ATPase domain (RuvB-L). Residues leucine 31, arginine 32, glycine 73, lysine 76, threonine 77, threonine 78, 139 to 141 (EDF), arginine 182, tyrosine 192, and arginine 229 each bind ATP. Threonine 77 serves as a coordination point for Mg(2+). Positions 193-263 (EPHELERVIH…IAAAALKVYE (71 aa)) are small ATPAse domain (RuvB-S). Residues 266-356 (ARGLDRLDRG…GNGQGDLFGA (91 aa)) form a head domain (RuvB-H) region. DNA is bound by residues arginine 302, arginine 321, and arginine 326.

It belongs to the RuvB family. Homohexamer. Forms an RuvA(8)-RuvB(12)-Holliday junction (HJ) complex. HJ DNA is sandwiched between 2 RuvA tetramers; dsDNA enters through RuvA and exits via RuvB. An RuvB hexamer assembles on each DNA strand where it exits the tetramer. Each RuvB hexamer is contacted by two RuvA subunits (via domain III) on 2 adjacent RuvB subunits; this complex drives branch migration. In the full resolvosome a probable DNA-RuvA(4)-RuvB(12)-RuvC(2) complex forms which resolves the HJ.

It is found in the cytoplasm. The catalysed reaction is ATP + H2O = ADP + phosphate + H(+). In terms of biological role, the RuvA-RuvB-RuvC complex processes Holliday junction (HJ) DNA during genetic recombination and DNA repair, while the RuvA-RuvB complex plays an important role in the rescue of blocked DNA replication forks via replication fork reversal (RFR). RuvA specifically binds to HJ cruciform DNA, conferring on it an open structure. The RuvB hexamer acts as an ATP-dependent pump, pulling dsDNA into and through the RuvAB complex. RuvB forms 2 homohexamers on either side of HJ DNA bound by 1 or 2 RuvA tetramers; 4 subunits per hexamer contact DNA at a time. Coordinated motions by a converter formed by DNA-disengaged RuvB subunits stimulates ATP hydrolysis and nucleotide exchange. Immobilization of the converter enables RuvB to convert the ATP-contained energy into a lever motion, pulling 2 nucleotides of DNA out of the RuvA tetramer per ATP hydrolyzed, thus driving DNA branch migration. The RuvB motors rotate together with the DNA substrate, which together with the progressing nucleotide cycle form the mechanistic basis for DNA recombination by continuous HJ branch migration. Branch migration allows RuvC to scan DNA until it finds its consensus sequence, where it cleaves and resolves cruciform DNA. The chain is Holliday junction branch migration complex subunit RuvB from Streptomyces avermitilis (strain ATCC 31267 / DSM 46492 / JCM 5070 / NBRC 14893 / NCIMB 12804 / NRRL 8165 / MA-4680).